A 122-amino-acid chain; its full sequence is Ribosome-binding factor A (122 aa).

This sequence belongs to the RbfA family. In terms of assembly, monomer. Binds 30S ribosomal subunits, but not 50S ribosomal subunits or 70S ribosomes.

It localises to the cytoplasm. One of several proteins that assist in the late maturation steps of the functional core of the 30S ribosomal subunit. Associates with free 30S ribosomal subunits (but not with 30S subunits that are part of 70S ribosomes or polysomes). Required for efficient processing of 16S rRNA. May interact with the 5'-terminal helix region of 16S rRNA. The sequence is that of Ribosome-binding factor A from Polynucleobacter necessarius subsp. necessarius (strain STIR1).